Here is a 161-residue protein sequence, read N- to C-terminus: Nucleotide-binding protein Bxeno_A3642 (161 aa).

This sequence belongs to the YajQ family.

Nucleotide-binding protein. The polypeptide is Nucleotide-binding protein Bxeno_A3642 (Paraburkholderia xenovorans (strain LB400)).